The following is a 508-amino-acid chain: MGTRFQSFLLVFLLSCLILISTASCERNGDGTIRIGLKKRKLDRSNRLASQLFLKNRGSHWSPKHYFRLNDENADMVPLKNYLDAQYYGDITIGTPPQKFTVIFDTGSSNLWIPSTKCYLSVACYFHSKYKASQSSSYRKNGKPASIRYGTGAISGYFSNDDVKVGDIVVKEQEFIEATSEPGITFLLAKFDGILGLGFKEISVGNSTPVWYNMVEKGLVKEPIFSFWLNRNPKDPEGGEIVFGGVDPKHFKGEHTFVPVTHKGYWQFDMGDLQIAGKPTGYCAKGCSAIADSGTSLLTGPSTVITMINHAIGAQGIVSRECKAVVDQYGKTMLNSLLAQEDPKKVCSQIGVCAYDGTQSVSMGIQSVVDDGTSGLLNQAMCSACEMAAVWMESELTQNQTQERILAYAAELCDHIPTQNQQSAVDCGRVSSMPIVTFSIGGRSFDLTPQDYIFKIGEGVESQCTSGFTAMDIAPPRGPLWILGDIFMGPYHTVFDYGKGRVGFAKAA.

The first 25 residues, 1–25 (MGTRFQSFLLVFLLSCLILISTASC), serve as a signal peptide directing secretion. Positions 26-69 (ERNGDGTIRIGLKKRKLDRSNRLASQLFLKNRGSHWSPKHYFRL) are cleaved as a propeptide — activation peptide. Residues 87-505 (YYGDITIGTP…DYGKGRVGFA (419 aa)) form the Peptidase A1 domain. Asp105 is a catalytic residue. Intrachain disulfides connect Cys118-Cys124 and Cys283-Cys287. Asp292 is a catalytic residue. Residues 317 to 419 (IVSRECKAVV…AELCDHIPTQ (103 aa)) enclose the Saposin B-type domain. 4 disulfide bridges follow: Cys322-Cys413, Cys347-Cys385, Cys353-Cys382, and Cys427-Cys464. Residue Asn399 is glycosylated (N-linked (GlcNAc...) asparagine).

The protein belongs to the peptidase A1 family. As to expression, expressed in petals, carpels and seed pods.

The protein resides in the secreted. Functionally, involved in the processing and degradation of storage proteins. This chain is Aspartic proteinase A3 (APA3), found in Arabidopsis thaliana (Mouse-ear cress).